A 322-amino-acid polypeptide reads, in one-letter code: 3-hydroxyacyl-CoA dehydrogenase FVEG_12628 (322 aa).

The chain crosses the membrane as a helical span at residues 5–25 (IRTVAIVGCGVIGMGWAVLFL). Residue E151 is the For hydroxyacyl-coenzyme A dehydrogenase activity of the active site.

Belongs to the 3-hydroxyacyl-CoA dehydrogenase family.

The protein localises to the membrane. Its function is as follows. 3-hydroxyacyl-CoA dehydrogenase; part of the Fusarium detoxification of benzoxazolinone cluster 2 (FDB2) involved in the degradation of benzoxazolinones produced by the host plant. Maize, wheat, and rye produce the 2 benzoxazinone phytoanticipins 2,4-dihy-droxy-7-methoxy-1,4-benzoxazin-3-one (DIMBOA) and 2,4-dihydroxy-1,4-benzoxazin-3-one (DIBOA) that, due to their inherent instability once released, spontaneously degrade to the more stable corresponding benzoxazolinones, 6-methoxy-2-benzoxazolinone (MBOA) and 2-benzoxazolinone (BOA), respectively. The first step in the detoxification of benzoxazolinones involves the hydrolysis of the cyclic ester bond of benzoxazolinones by the FDB1 cluster gamma-lactamase MBL1 to aminophenols. MBL1 is able to convert BOA into 2-aminophenol (2-AP), as well as MBOA into 5-methoxy-2-aminophenol (2-AMP). The FDB2 cluster N-malonyltransferase FDB2/NAT1 then metabolizes aminophenols via N-malonylation to non-toxic malonamic acids. FDB2/NAT1 converts 2-AP into N-(2-hydroxyphenyl) malonamic acid (HPMA) and 2-AMP into N-(2-hydroxy-4-methoxyphenyl) malonamic acid (HMPMA). The duplicated dienlactone hydrolases DLH1 and DLH2 may provide redundant function for hydrolyzing the lactone moiety in the BOA molecule. The roles of the amidases an other enzymes encoded by the 2 FDB clusters have not been identified so far. The polypeptide is 3-hydroxyacyl-CoA dehydrogenase FVEG_12628 (Gibberella moniliformis (strain M3125 / FGSC 7600) (Maize ear and stalk rot fungus)).